The chain runs to 297 residues: Light-independent protochlorophyllide reductase iron-sulfur ATP-binding protein (297 aa).

Residues 41-46 (GIGKST) and lysine 70 contribute to the ATP site. Serine 45 serves as a coordination point for Mg(2+). Residues cysteine 126 and cysteine 160 each contribute to the [4Fe-4S] cluster site. ATP is bound by residues 211–212 (NR) and 235–237 (PDL).

The protein belongs to the NifH/BchL/ChlL family. Homodimer. Protochlorophyllide reductase is composed of three subunits; BchL, BchN and BchB. It depends on [4Fe-4S] cluster as a cofactor.

The enzyme catalyses chlorophyllide a + oxidized 2[4Fe-4S]-[ferredoxin] + 2 ADP + 2 phosphate = protochlorophyllide a + reduced 2[4Fe-4S]-[ferredoxin] + 2 ATP + 2 H2O. It participates in porphyrin-containing compound metabolism; bacteriochlorophyll biosynthesis (light-independent). Component of the dark-operative protochlorophyllide reductase (DPOR) that uses Mg-ATP and reduced ferredoxin to reduce ring D of protochlorophyllide (Pchlide) to form chlorophyllide a (Chlide). This reaction is light-independent. The L component serves as a unique electron donor to the NB-component of the complex, and binds Mg-ATP. The protein is Light-independent protochlorophyllide reductase iron-sulfur ATP-binding protein of Cereibacter sphaeroides (strain KD131 / KCTC 12085) (Rhodobacter sphaeroides).